Reading from the N-terminus, the 488-residue chain is Glutamyl-tRNA(Gln) amidotransferase subunit A (488 aa).

Residues lysine 77 and serine 152 each act as charge relay system in the active site. The Acyl-ester intermediate role is filled by serine 176.

This sequence belongs to the amidase family. GatA subfamily. Heterotrimer of A, B and C subunits.

The enzyme catalyses L-glutamyl-tRNA(Gln) + L-glutamine + ATP + H2O = L-glutaminyl-tRNA(Gln) + L-glutamate + ADP + phosphate + H(+). In terms of biological role, allows the formation of correctly charged Gln-tRNA(Gln) through the transamidation of misacylated Glu-tRNA(Gln) in organisms which lack glutaminyl-tRNA synthetase. The reaction takes place in the presence of glutamine and ATP through an activated gamma-phospho-Glu-tRNA(Gln). In Streptococcus agalactiae serotype III (strain NEM316), this protein is Glutamyl-tRNA(Gln) amidotransferase subunit A.